A 2164-amino-acid chain; its full sequence is Hemagglutinin A (2164 aa).

An N-terminal signal peptide occupies residues 1–25; the sequence is MRKLNSLFSLAVLLSLLCWGQTAAA. Peptidase C25-like stretches follow at residues 26–539, 540–991, and 992–1443; these read QGGP…TPPP, GGSS…TPPP, and GGTS…TPPP. Disordered regions lie at residues 493–512 and 520–541; these read WDAPNGTPNPNPGTTTLSES and SWKTIDADGDGNNWTTTPPPGG. A compositionally biased stretch (low complexity) spans 496–508; the sequence is PNGTPNPNPGTTT.

This sequence belongs to the peptidase C25 family.

In terms of biological role, agglutinates erythrocytes. This Porphyromonas gingivalis (strain ATCC BAA-308 / W83) protein is Hemagglutinin A (hagA).